A 600-amino-acid polypeptide reads, in one-letter code: Dihydroxy-acid dehydratase (600 aa).

D82 lines the Mg(2+) pocket. A [2Fe-2S] cluster-binding site is contributed by C123. Positions 124 and 125 each coordinate Mg(2+). K125 carries the post-translational modification N6-carboxylysine. Position 192 (C192) interacts with [2Fe-2S] cluster. Residue E489 coordinates Mg(2+). The active-site Proton acceptor is the S515.

The protein belongs to the IlvD/Edd family. Homodimer. Requires [2Fe-2S] cluster as cofactor. Mg(2+) is required as a cofactor.

It catalyses the reaction (2R)-2,3-dihydroxy-3-methylbutanoate = 3-methyl-2-oxobutanoate + H2O. It carries out the reaction (2R,3R)-2,3-dihydroxy-3-methylpentanoate = (S)-3-methyl-2-oxopentanoate + H2O. It functions in the pathway amino-acid biosynthesis; L-isoleucine biosynthesis; L-isoleucine from 2-oxobutanoate: step 3/4. It participates in amino-acid biosynthesis; L-valine biosynthesis; L-valine from pyruvate: step 3/4. In terms of biological role, functions in the biosynthesis of branched-chain amino acids. Catalyzes the dehydration of (2R,3R)-2,3-dihydroxy-3-methylpentanoate (2,3-dihydroxy-3-methylvalerate) into 2-oxo-3-methylpentanoate (2-oxo-3-methylvalerate) and of (2R)-2,3-dihydroxy-3-methylbutanoate (2,3-dihydroxyisovalerate) into 2-oxo-3-methylbutanoate (2-oxoisovalerate), the penultimate precursor to L-isoleucine and L-valine, respectively. This Phocaeicola vulgatus (strain ATCC 8482 / DSM 1447 / JCM 5826 / CCUG 4940 / NBRC 14291 / NCTC 11154) (Bacteroides vulgatus) protein is Dihydroxy-acid dehydratase.